The sequence spans 201 residues: Dephospho-CoA kinase (201 aa).

Positions 3 to 201 (WIGLTGGIAC…KWLEELKNQN (199 aa)) constitute a DPCK domain. 11–16 (ACGKST) serves as a coordination point for ATP.

Belongs to the CoaE family.

The protein localises to the cytoplasm. The catalysed reaction is 3'-dephospho-CoA + ATP = ADP + CoA + H(+). Its pathway is cofactor biosynthesis; coenzyme A biosynthesis; CoA from (R)-pantothenate: step 5/5. In terms of biological role, catalyzes the phosphorylation of the 3'-hydroxyl group of dephosphocoenzyme A to form coenzyme A. In Bdellovibrio bacteriovorus (strain ATCC 15356 / DSM 50701 / NCIMB 9529 / HD100), this protein is Dephospho-CoA kinase.